A 157-amino-acid chain; its full sequence is Transcription elongation factor GreA (157 aa).

The stretch at 47–75 (SGEYEDAKKAQALLEGRIRELKHLLSRAE) forms a coiled coil.

It belongs to the GreA/GreB family.

In terms of biological role, necessary for efficient RNA polymerase transcription elongation past template-encoded arresting sites. The arresting sites in DNA have the property of trapping a certain fraction of elongating RNA polymerases that pass through, resulting in locked ternary complexes. Cleavage of the nascent transcript by cleavage factors such as GreA or GreB allows the resumption of elongation from the new 3'terminus. GreA releases sequences of 2 to 3 nucleotides. This chain is Transcription elongation factor GreA, found in Chloroflexus aurantiacus (strain ATCC 29366 / DSM 635 / J-10-fl).